The following is a 1386-amino-acid chain: MLRYLLKTLLQMNLFADSLAGDISNSSELLLGFNSSLAALNHTLLPPGDPSLNGSRVGPEDAMPRIVEQPPDLLVSRGEPATLPCRAEGRPRPNIEWYKNGARVATVREDPRAHRLLLPSGALFFPRIVHGRRARPDEGVYTCVARNYLGAAASRNASLEVAVLRDDFRQSPGNVVVAVGEPAVLECVPPRGHPEPSVSWRKDGARLKEEEGRITIRGGKLMMSHTLKSDAGMYVCVASNMAGERESAAAEVMVLERPSFLRRPVNQVVLADAPVTFLCEVKGDPPPRLRWRKEDGELPTGRYEIRSDHSLWIGHVSAEDEGTYTCVAENSVGRAEASGSLSVHVPPQLVTQPQDQMAAPGESVAFQCETKGNPPPAIFWQKEGSQVLLFPSQSLQPTGRFSVSPRGQLNITAVQRGDAGYYVCQAVSVAGSILAKALLEIKGASLDGLPPVILQGPANQTLVLGSSVWLPCRVTGNPQPSVRWKKDGQWLQGDDLQFKTMANGTLYIANVQEMDMGFYSCVAKSSTGEATWSGWLKMREDWGVSPDPPTEPSSPPGAPSQPVVTEITKNSITLTWKPNPQTGAAVTSYVIEAFSPAAGNTWRTVADGVQLETHTVSGLQPNTIYLFLVRAVGAWGLSEPSPVSEPVRTQDSSPSRPVEDPWRGQQGLAEVAVRLQEPIVLGPRTLQVSWTVDGPVQLVQGFRVSWRVAGPEGGSWTMLDLQSPSQQSTVLRGLPPGTQIQIKVQAQGQEGLGAESLSVTRSIPEEAPSGPPQGVAVALGGDGNSSITVSWEPPLPSQQNGVITEYQIWCLGNESRFHLNRSAAGWARSAMLRGLVPGLLYRTLVAAATSAGVGVPSAPVLVQLPSPPDLEPGLEVGAGLAVRLARVLREPAFLAGSGAACGALLLGLCAALYWRRKQRKELSHYTASFAYTPAVSFPHSEGLSGASSRPPMGLGPAPYSWLADSWPHPSRSPSAQEPRGSCCPSNPDPDDRYYNEAGISLYLAQTARGTAAPGEGPVYSTIDPAGEELQTFHGGFPQHPSGDLGPWSQYAPPEWSQGDSGAKGGKVKLLGKPVQMPSLNWPEALPPPPPSCELSCLEGPEEELEGSSEPEEWCPPMPERSHLTEPSSSGGCLVTPSRRETPSPTPSYGQQSTATLTPSPPDPPQPPTDMPHLHQMPRRVPLGPSSPLSVSQPMLGIREARPAGLGAGPAASPHLSPSPAPSTASSAPGRTWQGNGEMTPPLQGPRARFRKKPKALPYRRENSPGDLPPPPLPPPEEEASWALELRAAGSMSSLERERSGERKAVQAVPLAAQRVLHPDEEAWLPYSRPSFLSRGQGTSTCSTAGSNSSRGSSSSRGSRGPGRSRSRSQSRSQSQRPGQKRREEPR.

The N-terminal stretch at 1–20 (MLRYLLKTLLQMNLFADSLA) is a signal peptide. Residues 21–891 (GDISNSSELL…VRLARVLREP (871 aa)) are Extracellular-facing. 4 N-linked (GlcNAc...) asparagine glycosylation sites follow: Asn25, Asn34, Asn41, and Asn53. 5 Ig-like C2-type domains span residues 64 to 160 (PRIV…ASLE), 166 to 253 (DDFR…AEVM), 258 to 342 (PSFL…GSLS), 347 to 440 (PQLV…ALLE), and 450 to 531 (PPVI…GEAT). A disulfide bond links Cys85 and Cys143. A glycan (N-linked (GlcNAc...) asparagine) is linked at Asn156. Intrachain disulfides connect Cys187-Cys236, Cys279-Cys326, and Cys368-Cys424. Asn410, Asn459, and Asn503 each carry an N-linked (GlcNAc...) asparagine glycan. Cys472 and Cys521 are disulfide-bonded. Disordered stretches follow at residues 541-563 (DWGVSPDPPTEPSSPPGAPSQPV) and 639-662 (EPSPVSEPVRTQDSSPSRPVEDPW). Pro residues predominate over residues 546-559 (PDPPTEPSSPPGAP). Fibronectin type-III domains are found at residues 558-652 (APSQ…TQDS), 671-766 (VAVR…IPEE), and 771-869 (PPQG…SPPD). Asn784, Asn813, and Asn820 each carry an N-linked (GlcNAc...) asparagine glycan. The chain crosses the membrane as a helical span at residues 892–912 (AFLAGSGAACGALLLGLCAAL). Over 913–1386 (YWRRKQRKEL…PGQKRREEPR (474 aa)) the chain is Cytoplasmic. Disordered stretches follow at residues 965-989 (SWPHPSRSPSAQEPRGSCCPSNPDP), 1028-1310 (ELQT…AVPL), and 1327-1386 (SRPS…EEPR). Positions 1067 to 1083 (VKLLGKPVQMPSLNWPE) are enriched in low complexity. Residues 1099–1112 (GPEEELEGSSEPEE) show a composition bias toward acidic residues. A compositionally biased stretch (pro residues) spans 1158–1169 (PSPPDPPQPPTD). 2 stretches are compositionally biased toward low complexity: residues 1178–1191 (RRVPLGPSSPLSVS) and 1202–1229 (PAGLGAGPAASPHLSPSPAPSTASSAPG). Ser1263 carries the phosphoserine modification. Basic and acidic residues predominate over residues 1294–1304 (LERERSGERKA). A compositionally biased stretch (polar residues) spans 1333 to 1344 (SRGQGTSTCSTA). The span at 1345-1361 (GSNSSRGSSSSRGSRGP) shows a compositional bias: low complexity.

It belongs to the immunoglobulin superfamily. ROBO family. As to quaternary structure, monomer. Interacts (via Fibronectin type-III 1 domain) with NELL2 (via the EGF domains) with a 3:3 stoichiometry; this interaction promotes oligomerization of ROBO3 resulting in the repulsion of commissural axons in the midline.

Its subcellular location is the membrane. Receptor involved in axon guidance during development. Acts as a multifunctional regulator of pathfinding that simultaneously mediates NELL2 repulsion, inhibits SLIT repulsion, and facilitates Netrin-1/NTN1 attraction. In spinal cord development plays a role in guiding commissural axons probably by preventing premature sensitivity to Slit proteins thus inhibiting Slit signaling through ROBO1/ROBO2. Binding OF NELL2 to the receptor ROBO3 promotes oligomerization of ROBO3, resulting in the repulsion of commissural axons in the midline. ROBO3 also indirectly boosts axon attraction to NTN1 without interacting with NTN1 itself. The chain is Roundabout homolog 3 from Homo sapiens (Human).